Here is a 376-residue protein sequence, read N- to C-terminus: Probable cysteine protease RDL3 (376 aa).

Residues 1 to 27 (MAISFRTLALLTLSVLLISISLGVVTA) form the signal peptide. Positions 28–126 (TESQRNEGEV…ERYQYKEGDV (99 aa)) are cleaved as a propeptide — activation peptide. An N-linked (GlcNAc...) asparagine glycan is attached at Asn80. 2 cysteine pairs are disulfide-bonded: Cys149–Cys192 and Cys183–Cys226. Cys152 is an active-site residue. Residue Asn270 is glycosylated (N-linked (GlcNAc...) asparagine). Cys283 and Cys336 are oxidised to a cystine. Active-site residues include His290 and Asn311. The N-linked (GlcNAc...) asparagine glycan is linked to Asn349.

Belongs to the peptidase C1 family. As to expression, expressed in root hairs.

Functionally, probable thiol protease. The polypeptide is Probable cysteine protease RDL3 (Arabidopsis thaliana (Mouse-ear cress)).